Reading from the N-terminus, the 273-residue chain is Pantothenate synthetase (273 aa).

27–34 (MGALHNGH) serves as a coordination point for ATP. Residue His34 is the Proton donor of the active site. Residue Gln58 coordinates (R)-pantoate. Gln58 provides a ligand contact to beta-alanine. An ATP-binding site is contributed by 144 to 147 (GKKD). A (R)-pantoate-binding site is contributed by Gln150. Residues Val173 and 181 to 184 (LSSR) each bind ATP.

Belongs to the pantothenate synthetase family. In terms of assembly, homodimer.

It localises to the cytoplasm. It carries out the reaction (R)-pantoate + beta-alanine + ATP = (R)-pantothenate + AMP + diphosphate + H(+). It participates in cofactor biosynthesis; (R)-pantothenate biosynthesis; (R)-pantothenate from (R)-pantoate and beta-alanine: step 1/1. Functionally, catalyzes the condensation of pantoate with beta-alanine in an ATP-dependent reaction via a pantoyl-adenylate intermediate. This Campylobacter fetus subsp. fetus (strain 82-40) protein is Pantothenate synthetase.